A 752-amino-acid polypeptide reads, in one-letter code: MASKVTDARDWYQKKIGAYDQQIWEKSVEQREIKGLRNKPKKTGHVKPDLIDVDLVRGSAFAKAKPESPWTSLTRKGIVRVVFFPFFYRWWLQVTSRVIFFWLLVLYLLQVAAVVLFCTAQSPHNIPLTEVIGPIWLMLLLGTVHCQIVSTRTPKPPPSTGVKRRRKLRKAAHLEVHREGDGSSTTDNTQEGTVQSYGTSTSYSIGAVFRDIWHAAFFLSGSKKAKNSIDKSTETDNGYVSLEGKKTGKSSEECAQAQERLCEVIKPEESGWSTTTMRETFGTPSHHKETHRTVTNLSDEVSSEEGPETGYSLRRNVERTSSDGTLRNRKSHHYKKHYPLEDTPKSGTSCSSRCSSSRQDSESTRPESETEDVWEDLLHCAECHSSCTSETDVESPQMNPCVKKEYRDDPFHQSHLPWIHSLNPGLEKISAIVWEGNDCKKADMSVLEISGMIMNRVNSYIPGIGYQIFGNIISLILGLMPFVFRLSQAKDLEQLAAHSATELCITAFGSNGDILVLSMVVISFVVRVSLVWIFFFLLCVAERTYKQRLLFAKLFGHLTSARRARKSEVPHFRLKKVQNIKMWLSLRSYLKRRGPQRSVDVIVSSAFLLTISVVFICCAQLLHMHEIFLDCHYNWELVIWCISLTLFLLRFVTLGSETSKKYSNTSILLTEQINLYLKMEKKPNKKEELTLVNNVLKLATKLLKELDSPFRLYGLTMNPLLYNITQVVILSAVSGVISDLLGFNLKLWKIKS.

Positions 6-153 (TDARDWYQKK…VHCQIVSTRT (148 aa)) constitute a PHTF domain. The next 2 membrane-spanning stretches (helical) occupy residues 98–118 (VIFFWLLVLYLLQVAAVVLFC) and 126–146 (IPLTEVIGPIWLMLLLGTVHC). Disordered stretches follow at residues 173-194 (HLEVHREGDGSSTTDNTQEGTV), 227-251 (NSIDKSTETDNGYVSLEGKKTGKSS), and 273-371 (STTT…SETE). Residues 182–194 (GSSTTDNTQEGTV) are compositionally biased toward polar residues. Asn-296 carries N-linked (GlcNAc...) asparagine glycosylation. Over residues 327-337 (RNRKSHHYKKH) the composition is skewed to basic residues. The segment covering 346–358 (SGTSCSSRCSSSR) has biased composition (low complexity). The span at 359–368 (QDSESTRPES) shows a compositional bias: basic and acidic residues. Transmembrane regions (helical) follow at residues 464-484 (IGYQIFGNIISLILGLMPFVF), 520-540 (VVISFVVRVSLVWIFFFLLCV), 601-621 (VIVSSAFLLTISVVFICCAQL), and 635-655 (WELVIWCISLTLFLLRFVTLG). N-linked (GlcNAc...) asparagine glycosylation is found at Asn-664 and Asn-723. Residues 727-747 (VVILSAVSGVISDLLGFNLKL) traverse the membrane as a helical segment.

It localises to the membrane. This is Protein PHTF2 (PHTF2) from Gallus gallus (Chicken).